The sequence spans 558 residues: 2-isopropylmalate synthase (558 aa).

The Pyruvate carboxyltransferase domain maps to 28 to 304 (PIWCSVDLRD…DPELEFSNLN (277 aa)). Mg(2+) is bound by residues Asp-37, His-243, His-245, and Asn-279. Residues 438–558 (NRSPYYLKNY…VSALNRSKLK (121 aa)) are regulatory domain.

It belongs to the alpha-IPM synthase/homocitrate synthase family. LeuA type 2 subfamily. As to quaternary structure, homodimer. Mg(2+) serves as cofactor.

The protein localises to the cytoplasm. The catalysed reaction is 3-methyl-2-oxobutanoate + acetyl-CoA + H2O = (2S)-2-isopropylmalate + CoA + H(+). It participates in amino-acid biosynthesis; L-leucine biosynthesis; L-leucine from 3-methyl-2-oxobutanoate: step 1/4. Catalyzes the condensation of the acetyl group of acetyl-CoA with 3-methyl-2-oxobutanoate (2-ketoisovalerate) to form 3-carboxy-3-hydroxy-4-methylpentanoate (2-isopropylmalate). This chain is 2-isopropylmalate synthase, found in Clostridium acetobutylicum (strain ATCC 824 / DSM 792 / JCM 1419 / IAM 19013 / LMG 5710 / NBRC 13948 / NRRL B-527 / VKM B-1787 / 2291 / W).